The chain runs to 79 residues: Mipartoxin-3 (79 aa).

Residues 1–21 (MKTLLLTLVVVTIVCLDLGNS) form the signal peptide. Cystine bridges form between Cys-24/Cys-41, Cys-34/Cys-59, Cys-63/Cys-71, and Cys-72/Cys-77.

This sequence belongs to the three-finger toxin family. Short-chain subfamily. Expressed by the venom gland.

The protein localises to the secreted. In terms of biological role, snake venom neurotoxin that blocks neuromuscular transmission, presenting a postsynaptic action through the nicotinic acetylcholine receptor (nAChR). Has no cytotoxic activity. This Micrurus mipartitus (Red-tailed coral snake) protein is Mipartoxin-3.